We begin with the raw amino-acid sequence, 304 residues long: UDP-3-O-acyl-N-acetylglucosamine deacetylase (304 aa).

The Zn(2+) site is built by H78, H237, and D241. H264 serves as the catalytic Proton donor.

The protein belongs to the LpxC family. Zn(2+) serves as cofactor.

It carries out the reaction a UDP-3-O-[(3R)-3-hydroxyacyl]-N-acetyl-alpha-D-glucosamine + H2O = a UDP-3-O-[(3R)-3-hydroxyacyl]-alpha-D-glucosamine + acetate. Its pathway is glycolipid biosynthesis; lipid IV(A) biosynthesis; lipid IV(A) from (3R)-3-hydroxytetradecanoyl-[acyl-carrier-protein] and UDP-N-acetyl-alpha-D-glucosamine: step 2/6. Its function is as follows. Catalyzes the hydrolysis of UDP-3-O-myristoyl-N-acetylglucosamine to form UDP-3-O-myristoylglucosamine and acetate, the committed step in lipid A biosynthesis. This chain is UDP-3-O-acyl-N-acetylglucosamine deacetylase, found in Legionella pneumophila (strain Paris).